Consider the following 376-residue polypeptide: UDP-N-acetylglucosamine 2-epimerase (376 aa).

Residues R10, K15, D95, E117, H213, Q271, F276, 290–292 (SGG), E296, and R313 contribute to the substrate site.

It belongs to the UDP-N-acetylglucosamine 2-epimerase family. In terms of assembly, homodimer.

It localises to the cytoplasm. It carries out the reaction UDP-N-acetyl-alpha-D-glucosamine = UDP-N-acetyl-alpha-D-mannosamine. The protein operates within bacterial outer membrane biogenesis; enterobacterial common antigen biosynthesis. Catalyzes the reversible epimerization at C-2 of UDP-N-acetylglucosamine (UDP-GlcNAc) and thereby provides bacteria with UDP-N-acetylmannosamine (UDP-ManNAc), the activated donor of ManNAc residues. The chain is UDP-N-acetylglucosamine 2-epimerase from Yersinia pestis.